A 271-amino-acid polypeptide reads, in one-letter code: N-acetylaspartate synthetase (271 aa).

Residues 1–38 form a disordered region; sequence MTYRGTRKSPCCSPPPRCGPPLPSGPAGSALGPPSSGA. Positions 12 to 24 are enriched in pro residues; the sequence is CSPPPRCGPPLPS. Over residues 25 to 37 the composition is skewed to low complexity; that stretch reads GPAGSALGPPSSG. The chain crosses the membrane as a helical span at residues 89–109; it reads VYAVIIIMCFVVTKSLLVTCC. The N-acetyltransferase domain maps to 115–258; it reads LGMRYYYSRK…HSLLERLFFQ (144 aa).

It belongs to the NAT8 family.

It localises to the cytoplasm. It is found in the microsome membrane. The protein resides in the mitochondrion membrane. The protein localises to the endoplasmic reticulum membrane. It carries out the reaction L-aspartate + acetyl-CoA = N-acetyl-L-aspartate + CoA + H(+). Catalyzes the synthesis of N-acetylaspartate acid (NAA) from L-aspartate and acetyl-CoA. The chain is N-acetylaspartate synthetase (nat8l) from Xenopus tropicalis (Western clawed frog).